The sequence spans 574 residues: Arginine--tRNA ligase (574 aa).

Positions 126–136 match the 'HIGH' region motif; that stretch reads PNIAKRMHVGH.

Belongs to the class-I aminoacyl-tRNA synthetase family. Monomer.

It localises to the cytoplasm. It carries out the reaction tRNA(Arg) + L-arginine + ATP = L-arginyl-tRNA(Arg) + AMP + diphosphate. The protein is Arginine--tRNA ligase of Chloroflexus aggregans (strain MD-66 / DSM 9485).